The following is an 89-amino-acid chain: MDTRLINIGFGNIVAAGRVIAIVSPESAPIKRIISDARERGQLVDATYGRRTRAVIITDSGHVILSAIQPETVANRFLTAKVGAPEEPE.

It belongs to the RemA family.

The polypeptide is Putative regulatory protein CYA_2696 (Synechococcus sp. (strain JA-3-3Ab) (Cyanobacteria bacterium Yellowstone A-Prime)).